We begin with the raw amino-acid sequence, 478 residues long: Protein nucleotidyltransferase YdiU (478 aa).

Residues G84, G86, R87, K107, D119, G120, R170, and R177 each contribute to the ATP site. D246 (proton acceptor) is an active-site residue. Mg(2+)-binding residues include N247 and D256. An ATP-binding site is contributed by D256.

It belongs to the SELO family. The cofactor is Mg(2+). Mn(2+) serves as cofactor.

It catalyses the reaction L-seryl-[protein] + ATP = 3-O-(5'-adenylyl)-L-seryl-[protein] + diphosphate. The catalysed reaction is L-threonyl-[protein] + ATP = 3-O-(5'-adenylyl)-L-threonyl-[protein] + diphosphate. It carries out the reaction L-tyrosyl-[protein] + ATP = O-(5'-adenylyl)-L-tyrosyl-[protein] + diphosphate. The enzyme catalyses L-histidyl-[protein] + UTP = N(tele)-(5'-uridylyl)-L-histidyl-[protein] + diphosphate. It catalyses the reaction L-seryl-[protein] + UTP = O-(5'-uridylyl)-L-seryl-[protein] + diphosphate. The catalysed reaction is L-tyrosyl-[protein] + UTP = O-(5'-uridylyl)-L-tyrosyl-[protein] + diphosphate. Its function is as follows. Nucleotidyltransferase involved in the post-translational modification of proteins. It can catalyze the addition of adenosine monophosphate (AMP) or uridine monophosphate (UMP) to a protein, resulting in modifications known as AMPylation and UMPylation. The polypeptide is Protein nucleotidyltransferase YdiU (Escherichia coli O157:H7).